We begin with the raw amino-acid sequence, 234 residues long: Probable transcriptional regulatory protein Psyr_3028 (234 aa).

This sequence belongs to the TACO1 family.

The protein resides in the cytoplasm. This chain is Probable transcriptional regulatory protein Psyr_3028, found in Pseudomonas syringae pv. syringae (strain B728a).